Consider the following 576-residue polypeptide: Putative pentatricopeptide repeat-containing protein At5g47460 (576 aa).

PPR repeat units follow at residues S20–P53, D54–S88, N89–P119, D120–P154, N155–K189, N191–S225, W226–P252, D253–S287, W288–F318, D319–S353, R354–K384, N385–K419, D421–E452, and S458–G488. A type E motif region spans residues A493 to R570.

Belongs to the PPR family. PCMP-E subfamily.

The polypeptide is Putative pentatricopeptide repeat-containing protein At5g47460 (PCMP-E103) (Arabidopsis thaliana (Mouse-ear cress)).